A 203-amino-acid polypeptide reads, in one-letter code: Mediator of RNA polymerase II transcription subunit 22 (203 aa).

Positions 93 to 123 form a coiled coil; the sequence is SVNEAINQRNQQLRSLQEECDKKLIALRDEI. Residues 164-188 show a composition bias toward polar residues; that stretch reads ESLSMPLTTATAEQSIATSQSSTPS. The tract at residues 164 to 203 is disordered; it reads ESLSMPLTTATAEQSIATSQSSTPSHPHVNGHGAGPTDHS.

This sequence belongs to the Mediator complex subunit 22 family. Component of the Mediator complex.

It is found in the nucleus. Component of the Mediator complex, a coactivator involved in the regulated transcription of nearly all RNA polymerase II-dependent genes. Mediator functions as a bridge to convey information from gene-specific regulatory proteins to the basal RNA polymerase II transcription machinery. Mediator is recruited to promoters by direct interactions with regulatory proteins and serves as a scaffold for the assembly of a functional preinitiation complex with RNA polymerase II and the general transcription factors. The protein is Mediator of RNA polymerase II transcription subunit 22 (MED22) of Gallus gallus (Chicken).